We begin with the raw amino-acid sequence, 409 residues long: Serine/threonine transporter SstT (409 aa).

Helical transmembrane passes span 17-37 (LVGQIIVGLIAGLLLASFFPA), 49-69 (FVSALKAVAPVLVFVLVMASI), 83-103 (ILLLYLVGTFSAAVVAVIASF), 142-162 (ALISANFIGILAWAIGLGIAF), 180-200 (VSLIVKVVIRFAPLGIFGLVA), 218-238 (LVVLLGCMLFVAFVVNPLIVF), 301-321 (GAAITITVLTLAAVHTLGIAV), 331-351 (VVASICACGASGVAGGSLLLI), and 357-377 (LFGIPSEVAMQVVAVGFIIAI).

It belongs to the dicarboxylate/amino acid:cation symporter (DAACS) (TC 2.A.23) family.

The protein resides in the cell inner membrane. It catalyses the reaction L-serine(in) + Na(+)(in) = L-serine(out) + Na(+)(out). The enzyme catalyses L-threonine(in) + Na(+)(in) = L-threonine(out) + Na(+)(out). Involved in the import of serine and threonine into the cell, with the concomitant import of sodium (symport system). This Pseudomonas aeruginosa (strain LESB58) protein is Serine/threonine transporter SstT.